Reading from the N-terminus, the 173-residue chain is Co-chaperone protein HscB homolog (173 aa).

Residues 5–77 (CHFAQFDLQP…PRRALYLLTL (73 aa)) enclose the J domain.

The protein belongs to the HscB family. In terms of assembly, interacts with HscA and stimulates its ATPase activity.

Co-chaperone involved in the maturation of iron-sulfur cluster-containing proteins. Seems to help targeting proteins to be folded toward HscA. The chain is Co-chaperone protein HscB homolog from Pseudomonas aeruginosa (strain UCBPP-PA14).